The chain runs to 373 residues: D-alanine--D-alanine ligase (373 aa).

An ATP-grasp domain is found at 156-363 (KKLLAADGLP…YPTLLATMIE (208 aa)). 184-239 (CERLGLPVFVKPARGGSSIGVSRVSSWDQLPAAVARARRHDPKVIVEAAISGRELE) serves as a coordination point for ATP. Mg(2+) is bound by residues Asp-318, Glu-330, and Asn-332.

Belongs to the D-alanine--D-alanine ligase family. It depends on Mg(2+) as a cofactor. Mn(2+) is required as a cofactor.

The protein resides in the cytoplasm. It catalyses the reaction 2 D-alanine + ATP = D-alanyl-D-alanine + ADP + phosphate + H(+). Its pathway is cell wall biogenesis; peptidoglycan biosynthesis. In terms of biological role, cell wall formation. The sequence is that of D-alanine--D-alanine ligase from Mycobacterium tuberculosis (strain ATCC 25177 / H37Ra).